The sequence spans 476 residues: tRNA-2-methylthio-N(6)-dimethylallyladenosine synthase (476 aa).

Basic and acidic residues predominate over residues 1–14 (MTEVVHLHMPEEAR). The tract at residues 1–20 (MTEVVHLHMPEEARATQSRD) is disordered. Residues 26-147 (RRYYVWTVGC…APNPIYQLEE (122 aa)) form the MTTase N-terminal domain. C35, C71, C105, C170, C174, and C177 together coordinate [4Fe-4S] cluster. A Radical SAM core domain is found at 156–390 (DHPPVSVHVP…ERLQEQIAAE (235 aa)). Residues 393–453 (ARFLHQTVEV…PWSLQGVLAR (61 aa)) enclose the TRAM domain.

This sequence belongs to the methylthiotransferase family. MiaB subfamily. In terms of assembly, monomer. Requires [4Fe-4S] cluster as cofactor.

The protein localises to the cytoplasm. It catalyses the reaction N(6)-dimethylallyladenosine(37) in tRNA + (sulfur carrier)-SH + AH2 + 2 S-adenosyl-L-methionine = 2-methylsulfanyl-N(6)-dimethylallyladenosine(37) in tRNA + (sulfur carrier)-H + 5'-deoxyadenosine + L-methionine + A + S-adenosyl-L-homocysteine + 2 H(+). Its function is as follows. Catalyzes the methylthiolation of N6-(dimethylallyl)adenosine (i(6)A), leading to the formation of 2-methylthio-N6-(dimethylallyl)adenosine (ms(2)i(6)A) at position 37 in tRNAs that read codons beginning with uridine. The chain is tRNA-2-methylthio-N(6)-dimethylallyladenosine synthase from Roseiflexus sp. (strain RS-1).